Here is a 285-residue protein sequence, read N- to C-terminus: Bifunctional protein FolD (285 aa).

NADP(+) contacts are provided by residues 165–167 and serine 190; that span reads GRS.

It belongs to the tetrahydrofolate dehydrogenase/cyclohydrolase family. Homodimer.

The enzyme catalyses (6R)-5,10-methylene-5,6,7,8-tetrahydrofolate + NADP(+) = (6R)-5,10-methenyltetrahydrofolate + NADPH. It catalyses the reaction (6R)-5,10-methenyltetrahydrofolate + H2O = (6R)-10-formyltetrahydrofolate + H(+). Its pathway is one-carbon metabolism; tetrahydrofolate interconversion. Functionally, catalyzes the oxidation of 5,10-methylenetetrahydrofolate to 5,10-methenyltetrahydrofolate and then the hydrolysis of 5,10-methenyltetrahydrofolate to 10-formyltetrahydrofolate. This Burkholderia pseudomallei (strain 1710b) protein is Bifunctional protein FolD.